We begin with the raw amino-acid sequence, 168 residues long: Putative flavin-containing monooxygenase FMO GS-OX-like 11 (168 aa).

Residue 17–22 (GAGAAG) coordinates FAD.

Belongs to the FMO family. FAD serves as cofactor.

Functionally, catalyzes the conversion of methylthioalkyl glucosinolates of any chain length into methylsulfinylalkyl glucosinolates. This is Putative flavin-containing monooxygenase FMO GS-OX-like 11 from Arabidopsis thaliana (Mouse-ear cress).